Reading from the N-terminus, the 154-residue chain is Protein X (154 aa).

Residues 68 to 117 form a mitochondrial targeting sequence region; that stretch reads PCALRFTSARRMETTVNAHQVLPKVLHKRTLGLSAMSTTDLEAYFKDCLF.

It belongs to the orthohepadnavirus protein X family. As to quaternary structure, may form homodimer. May interact with host CEBPA, CFLAR, CREB1, DDB1, E4F1, HBXIP, HSPD1/HSP60, NFKBIA, POLR2E and SMAD4. Interacts with host SMC5-SMC6 complex and induces its degradation. Interacts with host TRPC4AP; leading to prevent ubiquitination of TRPC4AP. Interacts with host PLSCR1; this interaction promotes ubiquitination and degradation of HBx and impairs HBx-mediated cell proliferation. A fraction may be phosphorylated in insect cells and HepG2 cells, a human hepatoblastoma cell line. Phosphorylated in vitro by host protein kinase C or mitogen-activated protein kinase. N-acetylated in insect cells.

The protein resides in the host cytoplasm. It localises to the host nucleus. Its subcellular location is the host mitochondrion. Multifunctional protein that plays a role in silencing host antiviral defenses and promoting viral transcription. Does not seem to be essential for HBV infection. May be directly involved in development of cirrhosis and liver cancer (hepatocellular carcinoma). Most of cytosolic activities involve modulation of cytosolic calcium. The effect on apoptosis is controversial depending on the cell types in which the studies have been conducted. May induce apoptosis by localizing in mitochondria and causing loss of mitochondrial membrane potential. May also modulate apoptosis by binding host CFLAR, a key regulator of the death-inducing signaling complex (DISC). Promotes viral transcription by using the host E3 ubiquitin ligase DDB1 to target the SMC5-SMC6 complex to proteasomal degradation. This host complex would otherwise bind to viral episomal DNA, and prevents its transcription. Moderately stimulates transcription of many different viral and cellular transcription elements. Promoters and enhancers stimulated by HBx contain DNA binding sites for NF-kappa-B, AP-1, AP-2, c-EBP, ATF/CREB, or the calcium-activated factor NF-AT. This Hepatitis B virus genotype C subtype adr (strain Japan/adr4/1983) (HBV-C) protein is Protein X.